The chain runs to 94 residues: Co-chaperonin GroES (94 aa).

It belongs to the GroES chaperonin family. As to quaternary structure, heptamer of 7 subunits arranged in a ring. Interacts with the chaperonin GroEL.

It is found in the cytoplasm. Its function is as follows. Together with the chaperonin GroEL, plays an essential role in assisting protein folding. The GroEL-GroES system forms a nano-cage that allows encapsulation of the non-native substrate proteins and provides a physical environment optimized to promote and accelerate protein folding. GroES binds to the apical surface of the GroEL ring, thereby capping the opening of the GroEL channel. The polypeptide is Co-chaperonin GroES (Streptococcus oralis).